The chain runs to 450 residues: Glutamyl-tRNA(Gln) amidotransferase subunit A, mitochondrial (450 aa).

Catalysis depends on charge relay system residues Lys-47 and Ser-122. The Acyl-ester intermediate role is filled by Ser-146.

It belongs to the amidase family. GatA subfamily. In terms of assembly, subunit of the heterotrimeric GatFAB amidotransferase (AdT) complex, composed of A, B and F subunits.

The protein resides in the mitochondrion. The enzyme catalyses L-glutamyl-tRNA(Gln) + L-glutamine + ATP + H2O = L-glutaminyl-tRNA(Gln) + L-glutamate + ADP + phosphate + H(+). Functionally, allows the formation of correctly charged Gln-tRNA(Gln) through the transamidation of misacylated Glu-tRNA(Gln) in the mitochondria. The reaction takes place in the presence of glutamine and ATP through an activated gamma-phospho-Glu-tRNA(Gln). The sequence is that of Glutamyl-tRNA(Gln) amidotransferase subunit A, mitochondrial from Candida albicans (strain WO-1) (Yeast).